The following is a 223-amino-acid chain: Ras-related protein Rab-37 (223 aa).

Positions 1-13 are enriched in low complexity; it reads MTGTPGAATAGDG. The segment at 1–22 is disordered; the sequence is MTGTPGAATAGDGEAPERSPPF. N-acetylthreonine is present on Thr2. Residues Ser38, Gly39, Val40, Gly41, Lys42, Thr43, Cys44, and Thr62 each contribute to the GTP site. Thr43 is a binding site for Mg(2+). 2 short sequence motifs (switch) span residues 52-67 and 85-102; these read GAFL…GIDS and DTAG…YYRD. Mg(2+) is bound by residues Thr62 and Asp85. GTP-binding residues include Gly88, Asn143, Lys144, Asp146, Ser173, Ala174, and Lys175. S-geranylgeranyl cysteine attachment occurs at residues Cys219 and Cys220. Cys220 is subject to Cysteine methyl ester. A propeptide spans 221 to 223 (removed in mature form); that stretch reads SFV.

It belongs to the small GTPase superfamily. Rab family. As to quaternary structure, interacts with RIMS1. Interacts (in GDP-bound form) with RPGR, RPGR functions as guanine exchange factor (GEF). It depends on Mg(2+) as a cofactor. As to expression, expressed in the retina (at protein level). Specifically expressed in the bone marrow mast cells.

It localises to the cytoplasmic vesicle. The protein localises to the cell projection. Its subcellular location is the cilium. It carries out the reaction GTP + H2O = GDP + phosphate + H(+). With respect to regulation, regulated by guanine nucleotide exchange factors (GEFs) including RPGR which promote the exchange of bound GDP for free GTP. Regulated by GTPase activating proteins (GAPs) which increase the GTP hydrolysis activity. Inhibited by GDP dissociation inhibitors (GDIs). Its function is as follows. The small GTPases Rab are key regulators of intracellular membrane trafficking, from the formation of transport vesicles to their fusion with membranes. Rabs cycle between an inactive GDP-bound form and an active GTP-bound form that is able to recruit to membranes different sets of downstream effectors directly responsible for vesicle formation, movement, tethering and fusion. Acts as an organizer for autophagosome biogenesis in a GTP-dependent manner. Involved in retinal homeostasis by autophagy regulation. This is Ras-related protein Rab-37 from Mus musculus (Mouse).